Here is a 194-residue protein sequence, read N- to C-terminus: Ribosome maturation factor RimM (194 aa).

In terms of domain architecture, PRC barrel spans 92-190 (DDGYYDHELI…ALVVTPPEGL (99 aa)).

The protein belongs to the RimM family. In terms of assembly, binds ribosomal protein uS19.

The protein resides in the cytoplasm. In terms of biological role, an accessory protein needed during the final step in the assembly of 30S ribosomal subunit, possibly for assembly of the head region. Essential for efficient processing of 16S rRNA. May be needed both before and after RbfA during the maturation of 16S rRNA. It has affinity for free ribosomal 30S subunits but not for 70S ribosomes. This chain is Ribosome maturation factor RimM, found in Corynebacterium urealyticum (strain ATCC 43042 / DSM 7109).